A 112-amino-acid chain; its full sequence is Colipase (112 aa).

The signal sequence occupies residues 1–17 (MKVLVVLLVTLVAVAYA). Positions 18–22 (APGPR) are cleaved as a propeptide — enterostatin, activation peptide. Disulfide bonds link Cys-34–Cys-45, Cys-40–Cys-56, Cys-44–Cys-78, Cys-66–Cys-86, and Cys-80–Cys-104.

This sequence belongs to the colipase family. As to quaternary structure, forms a 1:1 stoichiometric complex with pancreatic lipase. As to expression, expressed by the pancreas.

The protein localises to the secreted. Its function is as follows. Colipase is a cofactor of pancreatic lipase. It allows the lipase to anchor itself to the lipid-water interface. Without colipase the enzyme is washed off by bile salts, which have an inhibitory effect on the lipase. Functionally, enterostatin has a biological activity as a satiety signal. The polypeptide is Colipase (Rattus norvegicus (Rat)).